A 322-amino-acid chain; its full sequence is Protein-L-isoaspartate O-methyltransferase (322 aa).

Positions 1 to 101 are disordered; it reads MSGERAKRFP…AKQGDRSAAP (101 aa). Basic and acidic residues predominate over residues 14 to 29; it reads EDLKREPRKPEGRVAE. Low complexity-rich tracts occupy residues 33–51 and 67–91; these read AGDAARQRLTAAAAVPAAA and AANPARAKQHAPAAPGAAKRAPQGG. S170 is a catalytic residue.

The protein belongs to the methyltransferase superfamily. L-isoaspartyl/D-aspartyl protein methyltransferase family.

The protein localises to the cytoplasm. The enzyme catalyses [protein]-L-isoaspartate + S-adenosyl-L-methionine = [protein]-L-isoaspartate alpha-methyl ester + S-adenosyl-L-homocysteine. Its function is as follows. Catalyzes the methyl esterification of L-isoaspartyl residues in peptides and proteins that result from spontaneous decomposition of normal L-aspartyl and L-asparaginyl residues. It plays a role in the repair and/or degradation of damaged proteins. This is Protein-L-isoaspartate O-methyltransferase from Burkholderia pseudomallei (strain 668).